The following is a 646-amino-acid chain: Chaperone protein DnaK (646 aa).

Threonine 197 carries the post-translational modification Phosphothreonine; by autocatalysis. The disordered stretch occupies residues 599-646 (QQGAQAGADPNAGSSQGAQAGTDYGTSGPKTGTADDVDYEVVNDDNDK). Positions 610–628 (AGSSQGAQAGTDYGTSGPK) are enriched in polar residues. Positions 633-646 (DDVDYEVVNDDNDK) are enriched in acidic residues.

Belongs to the heat shock protein 70 family.

Functionally, acts as a chaperone. The sequence is that of Chaperone protein DnaK from Treponema denticola (strain ATCC 35405 / DSM 14222 / CIP 103919 / JCM 8153 / KCTC 15104).